We begin with the raw amino-acid sequence, 120 residues long: Large ribosomal subunit protein uL18 (120 aa).

Over residues 1–10 (MKLTRRESKE) the composition is skewed to basic and acidic residues. Residues 1–26 (MKLTRRESKERRHRRVRGKVQGSPER) form a disordered region.

Belongs to the universal ribosomal protein uL18 family. Part of the 50S ribosomal subunit; part of the 5S rRNA/L5/L18/L25 subcomplex. Contacts the 5S and 23S rRNAs.

Functionally, this is one of the proteins that bind and probably mediate the attachment of the 5S RNA into the large ribosomal subunit, where it forms part of the central protuberance. The sequence is that of Large ribosomal subunit protein uL18 from Nostoc sp. (strain PCC 7120 / SAG 25.82 / UTEX 2576).